Consider the following 135-residue polypeptide: Large ribosomal subunit protein uL16c (135 aa).

It belongs to the universal ribosomal protein uL16 family. In terms of assembly, part of the 50S ribosomal subunit.

The protein localises to the plastid. The protein resides in the chloroplast. The polypeptide is Large ribosomal subunit protein uL16c (Lotus japonicus (Lotus corniculatus var. japonicus)).